The following is a 438-amino-acid chain: Gamma-glutamyl phosphate reductase (438 aa).

It belongs to the gamma-glutamyl phosphate reductase family.

The protein localises to the cytoplasm. The enzyme catalyses L-glutamate 5-semialdehyde + phosphate + NADP(+) = L-glutamyl 5-phosphate + NADPH + H(+). It functions in the pathway amino-acid biosynthesis; L-proline biosynthesis; L-glutamate 5-semialdehyde from L-glutamate: step 2/2. Functionally, catalyzes the NADPH-dependent reduction of L-glutamate 5-phosphate into L-glutamate 5-semialdehyde and phosphate. The product spontaneously undergoes cyclization to form 1-pyrroline-5-carboxylate. This Natronomonas pharaonis (strain ATCC 35678 / DSM 2160 / CIP 103997 / JCM 8858 / NBRC 14720 / NCIMB 2260 / Gabara) (Halobacterium pharaonis) protein is Gamma-glutamyl phosphate reductase.